The primary structure comprises 131 residues: MAKPTKGKAPRRARRNISAGRAYVHASYNNTIVTITDLDGNSVAWSSGGTIGYKGSKKGTPYAAQLAAADAVKKAQQTFGMNIVDVIVRGSGSGREQAIRAIQASGIEVKSIMDDTPVPHNGCRPKKKFRA.

This sequence belongs to the universal ribosomal protein uS11 family. Part of the 30S ribosomal subunit. Interacts with proteins S7 and S18. Binds to IF-3.

Its function is as follows. Located on the platform of the 30S subunit, it bridges several disparate RNA helices of the 16S rRNA. Forms part of the Shine-Dalgarno cleft in the 70S ribosome. The sequence is that of Small ribosomal subunit protein uS11 from Deinococcus deserti (strain DSM 17065 / CIP 109153 / LMG 22923 / VCD115).